The sequence spans 361 residues: Cobalt-precorrin-5B C(1)-methyltransferase (361 aa).

This sequence belongs to the CbiD family.

The catalysed reaction is Co-precorrin-5B + S-adenosyl-L-methionine = Co-precorrin-6A + S-adenosyl-L-homocysteine. It participates in cofactor biosynthesis; adenosylcobalamin biosynthesis; cob(II)yrinate a,c-diamide from sirohydrochlorin (anaerobic route): step 6/10. Catalyzes the methylation of C-1 in cobalt-precorrin-5B to form cobalt-precorrin-6A. The protein is Cobalt-precorrin-5B C(1)-methyltransferase of Methanobrevibacter smithii (strain ATCC 35061 / DSM 861 / OCM 144 / PS).